Consider the following 1190-residue polypeptide: Laminin subunit gamma-2 (1190 aa).

A signal peptide spans 1-21 (MPALWLRCGLCLALLLPAARA). Cystine bridges form between Cys-28–Cys-37, Cys-30–Cys-53, Cys-56–Cys-65, Cys-68–Cys-81, Cys-84–Cys-96, Cys-86–Cys-102, Cys-104–Cys-113, Cys-116–Cys-128, Cys-139–Cys-150, Cys-141–Cys-155, Cys-157–Cys-166, and Cys-169–Cys-184. 3 consecutive Laminin EGF-like domains span residues 28-83 (CDCN…RCLP), 84-130 (CNCN…GCAQ), and 139-186 (CDCD…GCTQ). The Laminin EGF-like 4; first part domain occupies 187–196 (CFCYGHSASC). The Laminin IV type A domain occupies 213 to 381 (QDVDGWKAVQ…SGAPAPWVEQ (169 aa)). Asn-342 and Asn-362 each carry an N-linked (GlcNAc...) asparagine glycan. One can recognise a Laminin EGF-like 4; second part domain in the interval 382–415 (CVCPVGYKGQFCQDCASGYKRDSARLGPFGTCIP). 3 consecutive Laminin EGF-like domains span residues 416 to 462 (CNCQ…SCKP), 463 to 517 (CPCR…PCQP), and 518 to 573 (CQCN…KCRA). Disulfide bonds link Cys-463–Cys-471, Cys-465–Cys-482, Cys-485–Cys-494, Cys-497–Cys-515, Cys-518–Cys-532, Cys-520–Cys-539, Cys-542–Cys-551, Cys-554–Cys-571, Cys-574–Cys-586, Cys-576–Cys-592, and Cys-594–Cys-603. A Laminin EGF-like 8; truncated domain is found at 574-603 (CNCNPVGSEPVECRSDGSCVCKPGFGGLSC). The interval 604-1190 (EHAALTSCPA…CYNTQALEQQ (587 aa)) is domain II and I. A coiled-coil region spans residues 613–718 (ACYNQVKVQM…GSQYQNQVQD (106 aa)). Ser-803 carries O-linked (Xyl...) (chondroitin sulfate) serine glycosylation. 2 coiled-coil regions span residues 809–1073 (AVVQ…AVQM) and 1114–1190 (EERL…LEQQ). Residues Asn-939 and Asn-1030 are each glycosylated (N-linked (GlcNAc...) asparagine).

As to quaternary structure, laminin is a complex glycoprotein, consisting of three different polypeptide chains (alpha, beta, gamma), which are bound to each other by disulfide bonds into a cross-shaped molecule comprising one long and three short arms with globules at each end. Gamma-2 is a subunit of laminin-5 (laminin-332 or epiligrin/kalinin/nicein). Post-translationally, O-glycosylated; contains chondroitin sulfate (CS).

The protein resides in the secreted. Its subcellular location is the extracellular space. It is found in the extracellular matrix. The protein localises to the basement membrane. In terms of biological role, binding to cells via a high affinity receptor, laminin is thought to mediate the attachment, migration and organization of cells into tissues during embryonic development by interacting with other extracellular matrix components. Ladsin exerts cell-scattering activity toward a wide variety of cells, including epithelial, endothelial, and fibroblastic cells. This is Laminin subunit gamma-2 (LAMC2) from Equus caballus (Horse).